Here is a 230-residue protein sequence, read N- to C-terminus: Small ribosomal subunit protein uS3 (230 aa).

The KH type-2 domain occupies 39–107; that stretch reads VRNYLFKKLI…PVHINIEEIK (69 aa).

Belongs to the universal ribosomal protein uS3 family. As to quaternary structure, part of the 30S ribosomal subunit. Forms a tight complex with proteins S10 and S14.

Functionally, binds the lower part of the 30S subunit head. Binds mRNA in the 70S ribosome, positioning it for translation. In Vesicomyosocius okutanii subsp. Calyptogena okutanii (strain HA), this protein is Small ribosomal subunit protein uS3.